The sequence spans 338 residues: Anthranilate phosphoribosyltransferase (338 aa).

5-phospho-alpha-D-ribose 1-diphosphate contacts are provided by residues Gly80, 83–84 (GD), Thr88, 90–93 (NIST), 108–116 (KHGNRSVSS), and Ser120. Gly80 provides a ligand contact to anthranilate. Ser92 is a Mg(2+) binding site. Asn111 serves as a coordination point for anthranilate. Residue Arg166 coordinates anthranilate. 2 residues coordinate Mg(2+): Asp225 and Glu226.

The protein belongs to the anthranilate phosphoribosyltransferase family. Homodimer. Requires Mg(2+) as cofactor.

It catalyses the reaction N-(5-phospho-beta-D-ribosyl)anthranilate + diphosphate = 5-phospho-alpha-D-ribose 1-diphosphate + anthranilate. Its pathway is amino-acid biosynthesis; L-tryptophan biosynthesis; L-tryptophan from chorismate: step 2/5. Functionally, catalyzes the transfer of the phosphoribosyl group of 5-phosphorylribose-1-pyrophosphate (PRPP) to anthranilate to yield N-(5'-phosphoribosyl)-anthranilate (PRA). This chain is Anthranilate phosphoribosyltransferase, found in Desulfatibacillum aliphaticivorans.